Reading from the N-terminus, the 371-residue chain is Queuine tRNA-ribosyltransferase (371 aa).

Catalysis depends on Asp89, which acts as the Proton acceptor. Substrate contacts are provided by residues 89-93 (DSGGF), Asp143, Gln185, and Gly212. The segment at 243-249 (GVGKPED) is RNA binding. Asp262 serves as the catalytic Nucleophile. The RNA binding; important for wobble base 34 recognition stretch occupies residues 267–271 (TRNAR). 4 residues coordinate Zn(2+): Cys300, Cys302, Cys305, and His331.

Belongs to the queuine tRNA-ribosyltransferase family. In terms of assembly, homodimer. Within each dimer, one monomer is responsible for RNA recognition and catalysis, while the other monomer binds to the replacement base PreQ1. Zn(2+) is required as a cofactor.

It catalyses the reaction 7-aminomethyl-7-carbaguanine + guanosine(34) in tRNA = 7-aminomethyl-7-carbaguanosine(34) in tRNA + guanine. It participates in tRNA modification; tRNA-queuosine biosynthesis. Its function is as follows. Catalyzes the base-exchange of a guanine (G) residue with the queuine precursor 7-aminomethyl-7-deazaguanine (PreQ1) at position 34 (anticodon wobble position) in tRNAs with GU(N) anticodons (tRNA-Asp, -Asn, -His and -Tyr). Catalysis occurs through a double-displacement mechanism. The nucleophile active site attacks the C1' of nucleotide 34 to detach the guanine base from the RNA, forming a covalent enzyme-RNA intermediate. The proton acceptor active site deprotonates the incoming PreQ1, allowing a nucleophilic attack on the C1' of the ribose to form the product. After dissociation, two additional enzymatic reactions on the tRNA convert PreQ1 to queuine (Q), resulting in the hypermodified nucleoside queuosine (7-(((4,5-cis-dihydroxy-2-cyclopenten-1-yl)amino)methyl)-7-deazaguanosine). The sequence is that of Queuine tRNA-ribosyltransferase from Azotobacter vinelandii (strain DJ / ATCC BAA-1303).